The chain runs to 353 residues: C-X-C chemokine receptor type 4 (353 aa).

The tract at residues 1–22 (MDGFRIYPSDNYTEDDLGSGDY) is important for chemokine binding and signaling. Topologically, residues 1–39 (MDGFRIYPSDNYTEDDLGSGDYDSMKEPCFREENAHFNR) are extracellular. At Tyr-7 the chain carries Sulfotyrosine. Residue Asn-11 is glycosylated (N-linked (GlcNAc...) asparagine). Residue Tyr-12 is modified to Sulfotyrosine. Ser-19 carries O-linked (Xyl...) (chondroitin sulfate) serine glycosylation. Tyr-22 bears the Sulfotyrosine mark. Disulfide bonds link Cys-29/Cys-275 and Cys-110/Cys-187. A helical membrane pass occupies residues 40-64 (IFLPTVYSIIFLTGIVGNGLVILVM). Topologically, residues 65–78 (GYQKKLRSMTDKYR) are cytoplasmic. The helical transmembrane segment at 79–100 (LHLSVADLLFVLTLPFWAVDAV) threads the bilayer. A chemokine binding region spans residues 95-98 (WAVD). Residues 101 to 111 (ANWYFGKFLCK) are Extracellular-facing. Residues 112-131 (AVHVIYTVNLYSSVLILAFI) form a helical membrane-spanning segment. The interval 114–118 (HVIYT) is chemokine binding. Residues 132–155 (SLDRYLAIVHATNSQRPRKLLAEK) lie on the Cytoplasmic side of the membrane. An Important for signaling motif is present at residues 134–136 (DRY). The segment at 136–148 (YLAIVHATNSQRP) is involved in dimerization; when bound to chemokine. A helical membrane pass occupies residues 156-175 (VVYVGVWIPALLLTIPDFIF). The Extracellular portion of the chain corresponds to 176 to 196 (ANVREADGRYICDRFYPSDSW). Residues 187–191 (CDRFY) form a chemokine binding, important for signaling region. The tract at residues 192-211 (PSDSWLVVFQFQHIMVGLIL) is involved in dimerization. A helical transmembrane segment spans residues 197–217 (LVVFQFQHIMVGLILPGIVIL). Over 218-242 (SCYCIIISKLSHSKGYQKRKALKTT) the chain is Cytoplasmic. Residues 243–262 (VILILAFFACWLPYYIGISI) form a helical membrane-spanning segment. At 263-283 (DSFILLEIIKQGCEFESTVHK) the chain is on the extracellular side. An involved in dimerization region spans residues 267–269 (LLE). A helical membrane pass occupies residues 284–303 (WISITEALAFFHCCLNPILY). Topologically, residues 304–353 (AFLGAKFKTSAQHALTSVSRGSSLKILSKGKRGGHSSVSTESESSSFHSS) are cytoplasmic. A phosphoserine mark is found at Ser-320 and Ser-322. 2 positions are modified to phosphoserine; by PKC and GRK6: Ser-325 and Ser-326. The interval 330–353 (LSKGKRGGHSSVSTESESSSFHSS) is disordered. Residue Ser-331 is modified to Phosphoserine; by GRK6. Residue Lys-332 forms a Glycyl lysine isopeptide (Lys-Gly) (interchain with G-Cter in ubiquitin) linkage. A compositionally biased stretch (low complexity) spans 338–353 (HSSVSTESESSSFHSS). Residue Ser-340 is modified to Phosphoserine; by GRK6. Phosphoserine is present on residues Ser-349 and Ser-352.

Belongs to the G-protein coupled receptor 1 family. As to quaternary structure, monomer. Can form homodimers. Interacts with CD164. Interacts with ARRB2; the interaction is dependent on the C-terminal phosphorylation of CXCR4 and allows activation of MAPK1 and MAPK3. Interacts with ARR3; the interaction is dependent on the C-terminal phosphorylation of CXCR4 and modulates calcium mobilization. Interacts with RNF113A; the interaction, enhanced by CXCL12, promotes CXCR4 ubiquitination and subsequent degradation. Interacts (via the cytoplasmic C-terminal) with ITCH (via the WW domains I and II); the interaction, enhanced by CXCL12, promotes CXCR4 ubiquitination and leads to its degradation. Interacts with extracellular ubiquitin. Interacts with DBN1; this interaction is enhanced by antigenic stimulation. Following LPS binding, may form a complex with GDF5, HSP90AA1 and HSPA8. Phosphorylated on agonist stimulation. Rapidly phosphorylated on serine and threonine residues in the C-terminal. Phosphorylation at Ser-325 and Ser-326 leads to recruitment of ITCH, ubiquitination and protein degradation. In terms of processing, ubiquitinated after ligand binding, leading to its degradation. Ubiquitinated by ITCH at the cell membrane on agonist stimulation. The ubiquitin-dependent mechanism, endosomal sorting complex required for transport (ESCRT), then targets CXCR4 for lysosomal degradation. This process is dependent also on prior Ser-/Thr-phosphorylation in the C-terminal of CXCR4. Also binding of ARRB1 to STAM negatively regulates CXCR4 sorting to lysosomes though modulating ubiquitination of SFR5S. Post-translationally, sulfation is required for efficient binding of CXCL12/SDF-1alpha and promotes its dimerization. O- and N-glycosylated. N-glycosylation can mask coreceptor function. The O-glycosylation chondroitin sulfate attachment does not affect interaction with CXCL12/SDF-1alpha nor its coreceptor activity.

It is found in the cell membrane. Its subcellular location is the cell junction. It localises to the early endosome. The protein localises to the late endosome. The protein resides in the lysosome. Functionally, receptor for the C-X-C chemokine CXCL12/SDF-1 that transduces a signal by increasing intracellular calcium ion levels and enhancing MAPK1/MAPK3 activation. Involved in the AKT signaling cascade. Plays a role in regulation of cell migration, e.g. during wound healing. Acts as a receptor for extracellular ubiquitin; leading to enhanced intracellular calcium ions and reduced cellular cAMP levels. Binds bacterial lipopolysaccharide (LPS) et mediates LPS-induced inflammatory response, including TNF secretion by monocytes. Involved in hematopoiesis and in cardiac ventricular septum formation. Also plays an essential role in vascularization of the gastrointestinal tract, probably by regulating vascular branching and/or remodeling processes in endothelial cells. Involved in cerebellar development. In the CNS, could mediate hippocampal-neuron survival. This chain is C-X-C chemokine receptor type 4 (CXCR4), found in Felis catus (Cat).